The sequence spans 283 residues: Protease HtpX (283 aa).

Transmembrane regions (helical) follow at residues 4–24 (ILLFLATNMAVMLVLGIILSV) and 33–53 (GGILIMALLFGFAGSLISLFL). H139 lines the Zn(2+) pocket. E140 is a catalytic residue. H143 contacts Zn(2+). The next 2 membrane-spanning stretches (helical) occupy residues 147–167 (GDMVTMALLQGVLNTFVIFLS) and 190–210 (IYFLVSMVLEMLFGVLASIIA). E218 provides a ligand contact to Zn(2+).

Belongs to the peptidase M48B family. Zn(2+) is required as a cofactor.

The protein resides in the cell inner membrane. The protein is Protease HtpX of Haemophilus influenzae (strain PittGG).